We begin with the raw amino-acid sequence, 336 residues long: MAPARENVSLFFKLYCLTVMTLVAAAYTVALRYTRTTAEELYFSTTAVCITEVIKLLISVGLLAKETGSLGRFKASLSENVLGSPKELAKLSVPSLVYAVQNNMAFLALSNLDAAVYQVTYQLKIPCTALCTVLMLNRTLSKLQWISVFMLCGGVTLVQWKPAQATKVVVAQNPLLGFGAIAIAVLCSGFAGVYFEKVLKSSDTSLWVRNIQMYLSGIVVTLAGTYLSDGAEIQEKGFFYGYTYYVWFVIFLASVGGLYTSVVVKYTDNIMKGFSAAAAIVLSTIASVLLFGLQITLSFALGALLVCVSIYLYGLPRQDTTSIQQEATSKERIIGV.

Topologically, residues 1–9 are cytoplasmic; that stretch reads MAPARENVS. Residues 10 to 30 traverse the membrane as a helical segment; the sequence is LFFKLYCLTVMTLVAAAYTVA. Topologically, residues 31–45 are lumenal; that stretch reads LRYTRTTAEELYFST. A helical transmembrane segment spans residues 46-64; it reads TAVCITEVIKLLISVGLLA. Lys55 is a binding site for CMP-N-acetyl-beta-neuraminate. Residues 65-87 are Cytoplasmic-facing; sequence KETGSLGRFKASLSENVLGSPKE. The chain crosses the membrane as a helical span at residues 88–108; it reads LAKLSVPSLVYAVQNNMAFLA. Position 101 to 102 (101 to 102) interacts with CMP-N-acetyl-beta-neuraminate; that stretch reads QN. Residues 109 to 114 are Lumenal-facing; the sequence is LSNLDA. A helical transmembrane segment spans residues 115–135; sequence AVYQVTYQLKIPCTALCTVLM. Residue 117–124 coordinates CMP-N-acetyl-beta-neuraminate; that stretch reads YQVTYQLK. Residues 136–141 are Cytoplasmic-facing; that stretch reads LNRTLS. Residues 142–160 traverse the membrane as a helical segment; sequence KLQWISVFMLCGGVTLVQW. At 161–175 the chain is on the lumenal side; that stretch reads KPAQATKVVVAQNPL. The chain crosses the membrane as a helical span at residues 176–196; it reads LGFGAIAIAVLCSGFAGVYFE. Ser188 is a CMP-N-acetyl-beta-neuraminate binding site. At 197 to 209 the chain is on the cytoplasmic side; it reads KVLKSSDTSLWVR. 210 to 214 contacts CMP-N-acetyl-beta-neuraminate; that stretch reads NIQMY. A helical membrane pass occupies residues 210–228; sequence NIQMYLSGIVVTLAGTYLS. The Lumenal segment spans residues 229–243; sequence DGAEIQEKGFFYGYT. A helical membrane pass occupies residues 244–262; sequence YYVWFVIFLASVGGLYTSV. Residues 263 to 269 are Cytoplasmic-facing; that stretch reads VVKYTDN. A helical transmembrane segment spans residues 270 to 288; it reads IMKGFSAAAAIVLSTIASV. Lys272 serves as a coordination point for CMP-N-acetyl-beta-neuraminate. Residues 289-296 lie on the Lumenal side of the membrane; sequence LLFGLQIT. A helical transmembrane segment spans residues 297–315; it reads LSFALGALLVCVSIYLYGL. The Cytoplasmic segment spans residues 316-336; the sequence is PRQDTTSIQQEATSKERIIGV. Residues 316-336 are disordered; the sequence is PRQDTTSIQQEATSKERIIGV.

This sequence belongs to the nucleotide-sugar transporter family. SLC35A subfamily. As to quaternary structure, monomer. In terms of tissue distribution, ubiquitous. Found in all the tissues examined including skeletal muscle, brain, heart, liver, kidney and spleen.

It localises to the golgi apparatus membrane. The catalysed reaction is CMP-N-acetyl-beta-neuraminate(in) + CMP(out) = CMP-N-acetyl-beta-neuraminate(out) + CMP(in). It carries out the reaction CMP-N-acetyl-beta-neuraminate(in) + AMP(out) = CMP-N-acetyl-beta-neuraminate(out) + AMP(in). It catalyses the reaction CDP-L-ribitol(in) + CDP(out) = CDP-L-ribitol(out) + CDP(in). The enzyme catalyses UMP(out) + CMP-N-acetyl-beta-neuraminate(in) = UMP(in) + CMP-N-acetyl-beta-neuraminate(out). Functionally, transports CMP-sialic acid from the cytosol into the Golgi apparatus, functioning as an antiporter that exchanges CMP-sialic acid for CMP. Binds both CMP-sialic acid and free CMP, but has higher affinity for free CMP. Also able to exchange CMP-sialic acid for AMP and UMP. Also mediates the transport of CDP-ribitol. This chain is CMP-sialic acid transporter, found in Mus musculus (Mouse).